Here is a 155-residue protein sequence, read N- to C-terminus: SsrA-binding protein (155 aa).

It belongs to the SmpB family.

The protein resides in the cytoplasm. In terms of biological role, required for rescue of stalled ribosomes mediated by trans-translation. Binds to transfer-messenger RNA (tmRNA), required for stable association of tmRNA with ribosomes. tmRNA and SmpB together mimic tRNA shape, replacing the anticodon stem-loop with SmpB. tmRNA is encoded by the ssrA gene; the 2 termini fold to resemble tRNA(Ala) and it encodes a 'tag peptide', a short internal open reading frame. During trans-translation Ala-aminoacylated tmRNA acts like a tRNA, entering the A-site of stalled ribosomes, displacing the stalled mRNA. The ribosome then switches to translate the ORF on the tmRNA; the nascent peptide is terminated with the 'tag peptide' encoded by the tmRNA and targeted for degradation. The ribosome is freed to recommence translation, which seems to be the essential function of trans-translation. The protein is SsrA-binding protein of Streptococcus pneumoniae (strain 70585).